Consider the following 700-residue polypeptide: DNA ligase 2 (700 aa).

Residues 42-46 (DDAYD) and 89-90 (SL) each bind NAD(+). Lys-122 (N6-AMP-lysine intermediate) is an active-site residue. NAD(+) contacts are provided by Arg-143, Glu-177, Lys-303, and Lys-327. Cys-421, Cys-424, Cys-437, and Cys-443 together coordinate Zn(2+). The segment at 590-621 (MTEPGATPPRPADTDGADGATAEAPGDGGPLA) is disordered. Positions 615–700 (GDGGPLAGMK…FAVLVAGLLS (86 aa)) constitute a BRCT domain.

It belongs to the NAD-dependent DNA ligase family. LigA subfamily. Mg(2+) serves as cofactor. Requires Mn(2+) as cofactor.

The enzyme catalyses NAD(+) + (deoxyribonucleotide)n-3'-hydroxyl + 5'-phospho-(deoxyribonucleotide)m = (deoxyribonucleotide)n+m + AMP + beta-nicotinamide D-nucleotide.. In terms of biological role, DNA ligase that catalyzes the formation of phosphodiester linkages between 5'-phosphoryl and 3'-hydroxyl groups in double-stranded DNA using NAD as a coenzyme and as the energy source for the reaction. It is essential for DNA replication and repair of damaged DNA. The polypeptide is DNA ligase 2 (Streptomyces coelicolor (strain ATCC BAA-471 / A3(2) / M145)).